The following is a 314-amino-acid chain: Ketimine reductase mu-crystallin (314 aa).

Arg47 lines the 3,3',5-triiodo-L-thyronine pocket. Asp82, His92, Arg119, Ala144, Val146, Gln147, Asn168, Arg169, Thr170, Asn173, Thr205, Leu206, Val226, and Ala228 together coordinate NADPH. Position 257 (Glu257) interacts with 3,3',5-triiodo-L-thyronine. Ser292 lines the NADPH pocket.

The protein belongs to the ornithine cyclodeaminase/mu-crystallin family. In terms of assembly, homodimer. Binds the thyroid hormone triiodothyronine (T3); T3 binding inhibits enzymatic activity. In terms of tissue distribution, expressed in neural tissues, muscle and kidney. Expressed in the inner ear.

The protein localises to the cytoplasm. The enzyme catalyses L-pipecolate + NADP(+) = Delta(1)-piperideine-2-carboxylate + NADPH + H(+). It catalyses the reaction L-pipecolate + NAD(+) = Delta(1)-piperideine-2-carboxylate + NADH + H(+). The catalysed reaction is L-proline + NADP(+) = 1-pyrroline-2-carboxylate + NADPH + H(+). It carries out the reaction L-proline + NAD(+) = 1-pyrroline-2-carboxylate + NADH + H(+). The enzyme catalyses (3R)-1,4-thiomorpholine-3-carboxylate + NAD(+) = 3,4-dehydrothiomorpholine-3-carboxylate + NADH + 2 H(+). It catalyses the reaction (3R)-1,4-thiomorpholine-3-carboxylate + NADP(+) = 3,4-dehydrothiomorpholine-3-carboxylate + NADPH + 2 H(+). The catalysed reaction is (S)-cystathionine ketimine + NADH + 2 H(+) = (3R,5S)-2,3,5,6,7-pentahydro-1,4-thiazepine-3,5-dicarboxylate + NAD(+). It carries out the reaction (S)-cystathionine ketimine + NADPH + 2 H(+) = (3R,5S)-2,3,5,6,7-pentahydro-1,4-thiazepine-3,5-dicarboxylate + NADP(+). The enzyme catalyses (R)-lanthionine ketimine + NADPH + 2 H(+) = (3R,5R)-1,4-thiomorpholine-3,5-dicarboxylate + NADP(+). It catalyses the reaction Delta(2)-thiazoline-2-carboxylate + NADPH + 2 H(+) = L-thiazolidine-2-carboxylate + NADP(+). Its activity is regulated as follows. Inhibited by thyroid hormones triiodothyronine (T3) and thyroxine (T4). Its function is as follows. Catalyzes the NAD(P)H-dependent reduction of imine double bonds of a number of cyclic ketimine substrates, including sulfur-containing cyclic ketimines. Under physiological conditions, it efficiently catalyzes delta(1)-piperideine-2-carboxylate (P2C) and delta(1)-pyrroline-2-carboxylate (Pyr2C) reduction, suggesting a central role in lysine and glutamate metabolism. Additional substrates are delta(2)-thiazoline-2-carboxylate (T2C), 3,4-dehydrothiomorpholine-3-carboxylate (AECK), and (R)-lanthionine ketimine (LK) that is reduced at very low rate compared to other substrates. Also catalyzes the NAD(P)H-dependent reduction of (S)-cystathionine ketimine (CysK). The protein is Ketimine reductase mu-crystallin of Homo sapiens (Human).